Consider the following 301-residue polypeptide: uncharacterized protein (301 aa).

Catalysis depends on charge relay system residues Ser44 and Tyr107. Tyr133 functions as the Proton donor in the catalytic mechanism. Lys162 (schiff-base intermediate with substrate) is an active-site residue.

It belongs to the DapA family. In terms of assembly, homotetramer.

The protein localises to the cytoplasm. This is an uncharacterized protein from Pyrobaculum neutrophilum (strain DSM 2338 / JCM 9278 / NBRC 100436 / V24Sta) (Thermoproteus neutrophilus).